Consider the following 763-residue polypeptide: Phosphoglycerol transferase I (763 aa).

4 helical membrane-spanning segments follow: residues leucine 4–tryptophan 19, tryptophan 26–serine 48, tyrosine 76–leucine 98, and proline 105–alanine 127.

This sequence belongs to the OpgB family.

It is found in the cell inner membrane. It carries out the reaction a phosphatidylglycerol + a membrane-derived-oligosaccharide D-glucose = a 1,2-diacyl-sn-glycerol + a membrane-derived-oligosaccharide 6-(glycerophospho)-D-glucose.. It functions in the pathway glycan metabolism; osmoregulated periplasmic glucan (OPG) biosynthesis. In terms of biological role, transfers a phosphoglycerol residue from phosphatidylglycerol to the membrane-bound nascent glucan backbones. The protein is Phosphoglycerol transferase I of Shigella flexneri.